Consider the following 238-residue polypeptide: Purine nucleoside phosphorylase DeoD-type (238 aa).

H5 lines the a purine D-ribonucleoside pocket. Phosphate is bound by residues G21, R25, R44, and 88–91; that span reads RVGS. Residues 180 to 182 and 204 to 205 contribute to the a purine D-ribonucleoside site; these read EME and SD. The Proton donor role is filled by D205.

The protein belongs to the PNP/UDP phosphorylase family. In terms of assembly, homohexamer; trimer of homodimers.

It carries out the reaction a purine D-ribonucleoside + phosphate = a purine nucleobase + alpha-D-ribose 1-phosphate. The enzyme catalyses a purine 2'-deoxy-D-ribonucleoside + phosphate = a purine nucleobase + 2-deoxy-alpha-D-ribose 1-phosphate. Its function is as follows. Catalyzes the reversible phosphorolytic breakdown of the N-glycosidic bond in the beta-(deoxy)ribonucleoside molecules, with the formation of the corresponding free purine bases and pentose-1-phosphate. The chain is Purine nucleoside phosphorylase DeoD-type from Proteus mirabilis (strain HI4320).